Here is a 367-residue protein sequence, read N- to C-terminus: Peptide chain release factor 1 (367 aa).

Position 243 is an N5-methylglutamine (Gln243).

This sequence belongs to the prokaryotic/mitochondrial release factor family. Methylated by PrmC. Methylation increases the termination efficiency of RF1.

It localises to the cytoplasm. Peptide chain release factor 1 directs the termination of translation in response to the peptide chain termination codons UAG and UAA. This Acidovorax ebreus (strain TPSY) (Diaphorobacter sp. (strain TPSY)) protein is Peptide chain release factor 1.